A 747-amino-acid chain; its full sequence is Major facilitator superfamily domain-containing protein 6-B (747 aa).

11 helical membrane-spanning segments follow: residues 15 to 35, 75 to 95, 222 to 242, 271 to 291, 306 to 326, 391 to 411, 420 to 440, 453 to 470, 485 to 507, 520 to 540, and 546 to 566; these read LLFF…CVLQ, KAVL…IGFV, TIFL…APAV, WGIA…TIFI, IAFI…TQFH, VLFV…FLFW, TTLF…AYFI, VLYI…YISY, GLTH…PPAL, LGLG…FFGA, and GLGM…WLLG. Composition is skewed to polar residues over residues 597–606 and 652–668; these read NQSTSQPNSD and NNDC…QTSA. 2 disordered regions span residues 597 to 625 and 652 to 747; these read NQST…NKPA and NNDC…PTTH. Low complexity predominate over residues 675 to 685; sequence STSSQPNASSS.

It belongs to the major facilitator superfamily. MFSD6 family.

The protein resides in the membrane. This is Major facilitator superfamily domain-containing protein 6-B (mfsd6b) from Danio rerio (Zebrafish).